A 461-amino-acid polypeptide reads, in one-letter code: Coronin-1A (461 aa).

N-acetylserine is present on serine 2. Serine 2 is modified (phosphoserine; by PKC). WD repeat units follow at residues 13–63 (HVFG…LVLP), 73–110 (NVPL…MVWE), 123–160 (PVIT…LVWD), 164–204 (GAAV…RVIE), 207–251 (KGTV…ALWD), 258–296 (PLSL…RYFE), and 302–349 (PFLH…EPIA). The span at 403 to 418 (ELRVNRGLDSARRRAT) shows a compositional bias: basic and acidic residues. The disordered stretch occupies residues 403–434 (ELRVNRGLDSARRRATPEPSGTPSSDTVSRLE). Serine 412 carries the phosphoserine; by PKC modification. Threonine 418 is modified (phosphothreonine). Over residues 421–430 (PSGTPSSDTV) the composition is skewed to polar residues. Phosphoserine is present on serine 422. A coiled-coil region spans residues 424 to 461 (TPSSDTVSRLEEDVRNLNAIVQKLQERLDRLEETVQAK).

It belongs to the WD repeat coronin family. As to quaternary structure, binds actin. Phosphorylation at Ser-412 by PKC strongly down-regulates the association with actin. Post-translationally, polyubiquitinated by RNF128 with 'Lys-48'-linked chains, leading to proteasomal degradation. As to expression, expressed in spleen, lymph nodes, thymus, brain and at very lower levels in lung. Also expressed in cells of the lymphoid/myeloid lineage. Not expressed in Kuffper cells.

Its subcellular location is the cytoplasm. The protein resides in the cytoskeleton. It is found in the cell cortex. It localises to the cytoplasmic vesicle. The protein localises to the phagosome membrane. Functionally, may be a crucial component of the cytoskeleton of highly motile cells, functioning both in the invagination of large pieces of plasma membrane, as well as in forming protrusions of the plasma membrane involved in cell locomotion. In mycobacteria-infected cells, its retention on the phagosomal membrane prevents fusion between phagosomes and lysosomes. This is Coronin-1A (Coro1a) from Mus musculus (Mouse).